Here is a 621-residue protein sequence, read N- to C-terminus: MRKTSLALAISALLSALPIASVQANESCTPLTGKEAGLDTGRSSAVRCLPGINPLQDLLNSGQNAFSPRGGMAGNDLNLWWAHRTEVLGQGINVAVVDDGLAIAHPDLADNVRPGSKNVVTGGSDPTPTDPDRCPRHSVSGIIAAVDNSIGTLGVAPRVQLQGFNLLDDNIQQLQKDWLYALGQRRHRRQPGLQPELRMSLVDPEGANGLDQVQLDRLFEQRTQHASAAYIKAAGTAFSRIAAGNYVAQPHRNLPKLPFENSNIDPSNSNFWNLVVRAINADGVRSSYSSVGSNVFLSAPGGEYGTDAPAMVTTDLPGCDMGYNRVDDPSTNRLHNNPQLDASCDYNGVMNGTSSATPNTTGAMVLMAPYPDLSVRDLRDLLARNATRLDANQGPVQINYTAANGERRQVTGLEGWERNAAGLWYSPSYGFGLVDVNKTQPCSRQPRTAATTGAVALAKGKGNGRSPSAPSRYVGSSPTRSSTQVDQPLTVEAVQVMVSLDHQRLPDLLIELVSPSGTRSVLLNPNNSLVGQSLDRQQLGYVRTKGLRDMRMLSHKFYGEPAHGEWRLEVTDVANAAAQVSLLDRRTNTRSTLTEGNNSQPGQLLDWSRGYSVLGHDAARS.

A signal peptide spans 1 to 24 (MRKTSLALAISALLSALPIASVQA). One can recognise a Peptidase S8 domain in the interval 68–440 (PRGGMAGNDL…FGLVDVNKTQ (373 aa)). The active-site Charge relay system is D98. Positions 114–133 (PGSKNVVTGGSDPTPTDPDR) are disordered. Catalysis depends on charge relay system residues H137 and S354. Residues 454–619 (AVALAKGKGN…GYSVLGHDAA (166 aa)) enclose the P/Homo B domain. Residues 457 to 485 (LAKGKGNGRSPSAPSRYVGSSPTRSSTQV) form a disordered region. Residues 465–485 (RSPSAPSRYVGSSPTRSSTQV) show a composition bias toward polar residues.

Belongs to the peptidase S8 family.

Functionally, agent of furonculosis. The chain is Microbial serine proteinase (aspA) from Aeromonas salmonicida.